A 284-amino-acid polypeptide reads, in one-letter code: uncharacterized protein (284 aa).

Positions 1-24 (MLYSRESRTTVLFLALVTSLTVLC) are cleaved as a signal peptide. Residues 25 to 84 (HSVDVTTVFTTSTITEITTVTAAPQPQNKAETALNTATNIIQTMQFLFNCAPFKWKGPLK) are Cytoplasmic-facing. The helical transmembrane segment at 85-104 (ITSCALNFIVLLLTAWGYLL) threads the bilayer. Residues 105–284 (KYLQENKLNS…SVHMYSSSLL (180 aa)) lie on the Extracellular side of the membrane. Asn-270 carries an N-linked (GlcNAc...) asparagine glycan.

It to yeast YNL019c.

The protein resides in the cell membrane. This is an uncharacterized protein from Saccharomyces cerevisiae (strain ATCC 204508 / S288c) (Baker's yeast).